A 177-amino-acid chain; its full sequence is Inorganic pyrophosphatase (177 aa).

Residues Lys-31, Arg-45, and Tyr-57 each contribute to the substrate site. Residues Asp-67, Asp-72, and Asp-104 each contribute to the Mg(2+) site. Residue Tyr-141 coordinates substrate.

The protein belongs to the PPase family. In terms of assembly, homohexamer. Requires Mg(2+) as cofactor.

The protein resides in the cytoplasm. It catalyses the reaction diphosphate + H2O = 2 phosphate + H(+). Catalyzes the hydrolysis of inorganic pyrophosphate (PPi) forming two phosphate ions. This is Inorganic pyrophosphatase from Halobacterium salinarum (strain ATCC 700922 / JCM 11081 / NRC-1) (Halobacterium halobium).